A 130-amino-acid polypeptide reads, in one-letter code: Small ribosomal subunit protein uS8 (130 aa).

It belongs to the universal ribosomal protein uS8 family. Part of the 30S ribosomal subunit.

Functionally, one of the primary rRNA binding proteins, it binds directly to 16S rRNA central domain where it helps coordinate assembly of the platform of the 30S subunit. This chain is Small ribosomal subunit protein uS8, found in Methanopyrus kandleri (strain AV19 / DSM 6324 / JCM 9639 / NBRC 100938).